Consider the following 343-residue polypeptide: Phenylalanine--tRNA ligase alpha subunit (343 aa).

Residue Glu264 participates in Mg(2+) binding.

Belongs to the class-II aminoacyl-tRNA synthetase family. Phe-tRNA synthetase alpha subunit type 1 subfamily. As to quaternary structure, tetramer of two alpha and two beta subunits. It depends on Mg(2+) as a cofactor.

Its subcellular location is the cytoplasm. It carries out the reaction tRNA(Phe) + L-phenylalanine + ATP = L-phenylalanyl-tRNA(Phe) + AMP + diphosphate + H(+). The chain is Phenylalanine--tRNA ligase alpha subunit from Aromatoleum aromaticum (strain DSM 19018 / LMG 30748 / EbN1) (Azoarcus sp. (strain EbN1)).